A 312-amino-acid polypeptide reads, in one-letter code: Acetyl-coenzyme A carboxylase carboxyl transferase subunit alpha (312 aa).

The region spanning 25 to 286 (GDDSAVEILK…GNYIIEKLNE (262 aa)) is the CoA carboxyltransferase C-terminal domain.

This sequence belongs to the AccA family. As to quaternary structure, acetyl-CoA carboxylase is a heterohexamer composed of biotin carboxyl carrier protein (AccB), biotin carboxylase (AccC) and two subunits each of ACCase subunit alpha (AccA) and ACCase subunit beta (AccD).

The protein localises to the cytoplasm. It carries out the reaction N(6)-carboxybiotinyl-L-lysyl-[protein] + acetyl-CoA = N(6)-biotinyl-L-lysyl-[protein] + malonyl-CoA. It participates in lipid metabolism; malonyl-CoA biosynthesis; malonyl-CoA from acetyl-CoA: step 1/1. Functionally, component of the acetyl coenzyme A carboxylase (ACC) complex. First, biotin carboxylase catalyzes the carboxylation of biotin on its carrier protein (BCCP) and then the CO(2) group is transferred by the carboxyltransferase to acetyl-CoA to form malonyl-CoA. The sequence is that of Acetyl-coenzyme A carboxylase carboxyl transferase subunit alpha from Campylobacter hominis (strain ATCC BAA-381 / DSM 21671 / CCUG 45161 / LMG 19568 / NCTC 13146 / CH001A).